The chain runs to 955 residues: Eukaryotic translation initiation factor 3 subunit A (955 aa).

A coiled-coil region spans residues 96-127 (LSLAEQRVTDAQAQADKIADEEEADDLEAEET). Residues 325–498 (YQRVASFVLL…RSVLFEEVRA (174 aa)) form the PCI domain. Coiled coils occupy residues 533-636 (AEAR…INAK) and 752-860 (KREA…KRAG). A compositionally biased stretch (basic and acidic residues) spans 789–858 (RAEEEAKAAA…ELEAKLEAKR (70 aa)). The disordered stretch occupies residues 789-955 (RAEEEAKAAA…GRYIPPSQRN (167 aa)).

Belongs to the eIF-3 subunit A family. As to quaternary structure, component of the eukaryotic translation initiation factor 3 (eIF-3) complex.

Its subcellular location is the cytoplasm. Its function is as follows. RNA-binding component of the eukaryotic translation initiation factor 3 (eIF-3) complex, which is involved in protein synthesis of a specialized repertoire of mRNAs and, together with other initiation factors, stimulates binding of mRNA and methionyl-tRNAi to the 40S ribosome. The eIF-3 complex specifically targets and initiates translation of a subset of mRNAs involved in cell proliferation. This chain is Eukaryotic translation initiation factor 3 subunit A, found in Yarrowia lipolytica (strain CLIB 122 / E 150) (Yeast).